The following is a 662-amino-acid chain: Glycine--tRNA ligase beta subunit (662 aa).

It belongs to the class-II aminoacyl-tRNA synthetase family. In terms of assembly, tetramer of two alpha and two beta subunits.

The protein localises to the cytoplasm. It carries out the reaction tRNA(Gly) + glycine + ATP = glycyl-tRNA(Gly) + AMP + diphosphate. In Rickettsia akari (strain Hartford), this protein is Glycine--tRNA ligase beta subunit.